A 492-amino-acid chain; its full sequence is Cytochrome P450 2A12 (492 aa).

Residue Cys-437 coordinates heme.

Belongs to the cytochrome P450 family. Heme serves as cofactor. As to expression, liver.

The protein localises to the endoplasmic reticulum membrane. It is found in the microsome membrane. It carries out the reaction an organic molecule + reduced [NADPH--hemoprotein reductase] + O2 = an alcohol + oxidized [NADPH--hemoprotein reductase] + H2O + H(+). Functionally, highly active in the 7-alpha-hydroxylation of testosterone. This is Cytochrome P450 2A12 (Cyp2a12) from Mus musculus (Mouse).